The following is a 258-amino-acid chain: Global transcriptional regulator CodY (258 aa).

Positions 1–156 (MSSLLEKTRQ…SATIIGLEIL (156 aa)) are GAF domain. The H-T-H motif DNA-binding region spans 204 to 223 (ASKIADKVGITRSVIVNALR).

The protein belongs to the CodY family.

Its subcellular location is the cytoplasm. DNA-binding global transcriptional regulator which is involved in the adaptive response to starvation and acts by directly or indirectly controlling the expression of numerous genes in response to nutrient availability. During rapid exponential growth, CodY is highly active and represses genes whose products allow adaptation to nutrient depletion. The sequence is that of Global transcriptional regulator CodY from Clostridium tetani (strain Massachusetts / E88).